We begin with the raw amino-acid sequence, 220 residues long: RING-H2 finger protein ATL77 (220 aa).

The chain crosses the membrane as a helical span at residues 53 to 73 (LMLLSILLCGIICSLGLHYII). The RING-type; atypical zinc finger occupies 130-172 (CVICLSDFVAGEQLRVLPKCNHGFHLRCIDKWLTQHMTCPKCR).

This sequence belongs to the RING-type zinc finger family. ATL subfamily.

The protein localises to the membrane. It catalyses the reaction S-ubiquitinyl-[E2 ubiquitin-conjugating enzyme]-L-cysteine + [acceptor protein]-L-lysine = [E2 ubiquitin-conjugating enzyme]-L-cysteine + N(6)-ubiquitinyl-[acceptor protein]-L-lysine.. It participates in protein modification; protein ubiquitination. This Arabidopsis thaliana (Mouse-ear cress) protein is RING-H2 finger protein ATL77 (ATL77).